Reading from the N-terminus, the 360-residue chain is Heme A synthase (360 aa).

The next 5 membrane-spanning stretches (helical) occupy residues 13-33 (AVRWWLISVAALIALMVLVGG), 99-119 (LLGRFIGVAYLLPFLFFLWRG), 129-149 (LWLLFALGGLQGAVGWWMVAS), 160-180 (YRLATHLVLALLIFAGIVWTV), and 199-219 (SALLLVVTFVQIYLGALVAGL). His-263 is a heme binding site. 3 consecutive transmembrane segments (helical) span residues 265-282 (MTAYALFVLAALHAFDAV), 292-312 (GALWLFAAVSLQAVLGILTLL), and 315-335 (VPIGLALAHQAVAIAVLTLAV). His-323 lines the heme pocket.

Belongs to the COX15/CtaA family. Type 2 subfamily. Interacts with CtaB. Heme b serves as cofactor.

It is found in the cell membrane. The catalysed reaction is Fe(II)-heme o + 2 A + H2O = Fe(II)-heme a + 2 AH2. The protein operates within porphyrin-containing compound metabolism; heme A biosynthesis; heme A from heme O: step 1/1. Catalyzes the conversion of heme O to heme A by two successive hydroxylations of the methyl group at C8. The first hydroxylation forms heme I, the second hydroxylation results in an unstable dihydroxymethyl group, which spontaneously dehydrates, resulting in the formyl group of heme A. This chain is Heme A synthase, found in Bradyrhizobium diazoefficiens (strain JCM 10833 / BCRC 13528 / IAM 13628 / NBRC 14792 / USDA 110).